The primary structure comprises 361 residues: Peptide chain release factor 1 (361 aa).

Position 236 is an N5-methylglutamine (Gln-236).

This sequence belongs to the prokaryotic/mitochondrial release factor family. In terms of processing, methylated by PrmC. Methylation increases the termination efficiency of RF1.

It is found in the cytoplasm. Its function is as follows. Peptide chain release factor 1 directs the termination of translation in response to the peptide chain termination codons UAG and UAA. This is Peptide chain release factor 1 from Levilactobacillus brevis (strain ATCC 367 / BCRC 12310 / CIP 105137 / JCM 1170 / LMG 11437 / NCIMB 947 / NCTC 947) (Lactobacillus brevis).